The primary structure comprises 333 residues: L-lactate dehydrogenase B chain (333 aa).

NAD(+)-binding positions include 29–57 (GQVG…WEDK) and Arg99. Residues Arg106, Asn138, and Arg169 each contribute to the substrate site. Asn138 provides a ligand contact to NAD(+). His193 serves as the catalytic Proton acceptor. A substrate-binding site is contributed by Thr248.

The protein belongs to the LDH/MDH superfamily. LDH family. Homotetramer.

The protein localises to the cytoplasm. It carries out the reaction (S)-lactate + NAD(+) = pyruvate + NADH + H(+). Its pathway is fermentation; pyruvate fermentation to lactate; (S)-lactate from pyruvate: step 1/1. Its function is as follows. Interconverts simultaneously and stereospecifically pyruvate and lactate with concomitant interconversion of NADH and NAD(+). This Alligator mississippiensis (American alligator) protein is L-lactate dehydrogenase B chain (LDHB).